The following is an 85-amino-acid chain: UPF0297 protein lhv_0439 (85 aa).

This sequence belongs to the UPF0297 family.

The chain is UPF0297 protein lhv_0439 from Lactobacillus helveticus (strain DPC 4571).